Consider the following 369-residue polypeptide: Peptide chain release factor 2 (369 aa).

Glutamine 251 is modified (N5-methylglutamine).

It belongs to the prokaryotic/mitochondrial release factor family. Post-translationally, methylated by PrmC. Methylation increases the termination efficiency of RF2.

The protein resides in the cytoplasm. Peptide chain release factor 2 directs the termination of translation in response to the peptide chain termination codons UGA and UAA. In Chlamydia trachomatis serovar A (strain ATCC VR-571B / DSM 19440 / HAR-13), this protein is Peptide chain release factor 2.